The sequence spans 578 residues: Protein LIKE EARLY STARVATION, chloroplastic (578 aa).

The transit peptide at 1-56 directs the protein to the chloroplast; sequence MALRLGVSIGAALGSSHWDDGQRVRQRDFSASVNFTAPVTSRRSLRGSRTGVRILR. Disordered stretches follow at residues 146–166 and 187–206; these read NNSG…TSEV and SETS…TPPQ.

This sequence belongs to the ESV1 family. As to expression, expressed ubiquitously.

Its subcellular location is the plastid. It is found in the chloroplast stroma. Functionally, binds preferentially to highly ordered alpha-glucans, such as starch and crystalline maltodextrins. Involved in the organization of the starch granule matrix, thus influencing starch turnover by modulating the accessibility of starch polymers to modifying and degrading enzymes involved in phosphorylation, hydrolyzes and synthesis, including starch synthases (SSI and SSIII), starch phosphorylases (PHS1), isoamylase, beta-amylase, glucan water dikinase (GWD) and phosphoglucan water dikinase (PWD). The polypeptide is Protein LIKE EARLY STARVATION, chloroplastic (Arabidopsis thaliana (Mouse-ear cress)).